A 208-amino-acid chain; its full sequence is Uracil phosphoribosyltransferase (208 aa).

5-phospho-alpha-D-ribose 1-diphosphate contacts are provided by residues Arg-78, Arg-103, and 130 to 138 (DPMLATGGT). Residues Ile-193 and 198 to 200 (GDA) each bind uracil. Asp-199 provides a ligand contact to 5-phospho-alpha-D-ribose 1-diphosphate.

This sequence belongs to the UPRTase family. Mg(2+) serves as cofactor.

It catalyses the reaction UMP + diphosphate = 5-phospho-alpha-D-ribose 1-diphosphate + uracil. It functions in the pathway pyrimidine metabolism; UMP biosynthesis via salvage pathway; UMP from uracil: step 1/1. Allosterically activated by GTP. In terms of biological role, catalyzes the conversion of uracil and 5-phospho-alpha-D-ribose 1-diphosphate (PRPP) to UMP and diphosphate. This Solidesulfovibrio magneticus (strain ATCC 700980 / DSM 13731 / RS-1) (Desulfovibrio magneticus) protein is Uracil phosphoribosyltransferase.